Consider the following 558-residue polypeptide: T-complex protein 1 subunit gamma (558 aa).

A disulfide bond links cysteine 381 and cysteine 387.

The protein belongs to the TCP-1 chaperonin family. Heterooligomeric complex of about 850 to 900 kDa that forms two stacked rings, 12 to 16 nm in diameter.

Its subcellular location is the cytoplasm. In terms of biological role, molecular chaperone; assists the folding of proteins upon ATP hydrolysis. Known to play a role, in vitro, in the folding of actin and tubulin. This is T-complex protein 1 subunit gamma from Thalassiosira weissflogii (Marine diatom).